A 155-amino-acid polypeptide reads, in one-letter code: DNA gyrase inhibitor (155 aa).

Belongs to the DNA gyrase inhibitor family. In terms of assembly, interacts with DNA gyrase.

It is found in the cytoplasm. Its function is as follows. Inhibits the supercoiling activity of DNA gyrase. Acts by inhibiting DNA gyrase at an early step, prior to (or at the step of) binding of DNA by the gyrase. It protects cells against toxins that target DNA gyrase, by inhibiting activity of these toxins and reducing the formation of lethal double-strand breaks in the cell. The polypeptide is DNA gyrase inhibitor (Salmonella arizonae (strain ATCC BAA-731 / CDC346-86 / RSK2980)).